The following is an 811-amino-acid chain: MHSTGEPQRGPAGPYHHPMPYHVDQIPTTSHPSWHQAPHPGLPTPPYHPQQHPNYISMQPPPSQQQQMTPQALSTQQQQQVQQQQQRQLYSSPSPSRGPAAPAQNQKFRTEQWINNQAWPYSQSPAPPVAPSVMSYHQGDDRMSMLSVNTTMTNQFPDSQRCYSSNGSTCENVNPEMMQMNITQAAEQAIRLWFNTPDPMQRLHMAKTIRTWIRQDKFAQVDQANMPNCVQQILNIIYDGLKPQPVQLPISYYAQLWYNLLDILRRFTFLPIISPYIHQVVQMFCPRENGPQDFRELICNLISLNWQKDPHMKHCANQVFQIFNCIIMGVKNEKLRTEFAQHLKFEKLVGTLSEYFNPQVHPGMINPAIFIIFRFIISKDTRLKDYFIWNNNPHDQPPPPTGLIIKLNAVMIGSYRLIAGQNPETLPQNPELAHLIQVIIRTFDLLGLLLHDSDAIDGFVRSDGVGAITTVVQYPNNDLIRAGCKLLLQVSDAKALAKTPLENILPFLLRLIEIHPDDEVIYSGTGFLSNVVAHKQHVKDIAIRSNAIFLLHTIISKYPRLDELTDAPKRNRVCEIICNCLRTLNNFLMMWIPTPNGETKTAGPNEKQQVCKFIEIDILKKLMSCLSCEGMDTPGLLELRSTILRSFILLLRTPFVPKDGVLNVIDENRKENLIGHICAAYSWVFRQPNNTRTQSTKQQLVERTISLLLVLMEQCGAEKEVAQYSYSIDCPLNLLNGNQVKPTFIHNVLVVCDKILEHCPTRADIWTIDRPMLEGLTNHRNSDIAKAANSLLSRFPENDLLAGIFSNREYF.

The segment at methionine 1–asparagine 105 is disordered. The segment covering glutamine 64–alanine 103 has biased composition (low complexity).

In terms of assembly, interacts with TCF transcription factor pop-1 (via N-terminal region); interaction is direct.

Its subcellular location is the nucleus. The protein resides in the cytoplasm. It is found in the cytoplasmic granule. It localises to the cytoskeleton. The protein localises to the microtubule organizing center. Its subcellular location is the centrosome. The protein resides in the chromosome. It is found in the centromere. It localises to the kinetochore. In terms of biological role, transcription coregulator. Part of the Wnt signaling asymmetry pathway, probably acting downstream of putative frizzled ligand mom-2, Wnt/frizzled receptors lin-17 and mom-5, and dishevelled homolog dsh-2. Activates or represses target gene expression, depending on upstream Wnt signals and interactions with transcription factors, such as pop-1. Required for the activation of Wnt-responsive genes in the E blastomere; thereby leading to a role in endoderm specification and gut development. Reciprocal distribution patterns of sys-1 and pop-1/TCF in the daughters of anterior-posterior cell divisions functions in specifying cell fate; a higher sys-1 to pop-1 ratio promotes the posterior cell fate, whereas a low sys-1 to pop-1 ratio promotes the anterior fate. Represses expression of homeobox ttx-3 in neuroblasts of the SIAD/SIBV lineage, perhaps acting by blocking its transcriptional activation by a complex consisting of ref-2 and pop-1. Required for early organization of the hermaphrodite, but not the male, gonad; involved in generation of regulatory cells, known as the distal tip cells (DTC), and in formation of the somatic gonadal primordium. Involved in regulating asymmetric divisions of the somatic gonadal precursor cells (SGP), Z1 and Z4. This chain is Beta-catenin homolog sys-1, found in Caenorhabditis elegans.